A 306-amino-acid polypeptide reads, in one-letter code: Protein YIPF1 (306 aa).

Topologically, residues 1 to 119 (MAAVDDLQFE…VRLYIRSNPD (119 aa)) are cytoplasmic. Residues 33–59 (PSVSFKHQPRPPGSLGREEDEELLGTN) form a disordered region. The segment covering 50 to 59 (EEDEELLGTN) has biased composition (acidic residues). Residues 120–140 (LYGPFWICATLVFAIAISGNL) traverse the membrane as a helical segment. The Lumenal segment spans residues 141–162 (SNFLIHLGEKTYHYVPEFQKVS). Residues 163–183 (IAATVIYAYAWLVPLALWGFL) form a helical membrane-spanning segment. Over 184–200 (LWRNSKVMNIVSYSFLE) the chain is Cytoplasmic. Residues 201–221 (IVCVYGYSLFIYIPTAVLWII) form a helical membrane-spanning segment. Residues 222-227 (PQRVIR) are Lumenal-facing. Residues 228–248 (WVLVTIALGISGSVLAMTFWP) form a helical membrane-spanning segment. Topologically, residues 249 to 256 (AVREDNRR) are cytoplasmic. The chain crosses the membrane as a helical span at residues 257-277 (VALATIVTIMLLHVLLSVGCL). The Lumenal segment spans residues 278-306 (AYFFDAPEMDHLPAAITTPNQTVAAAKSS). Asn-297 is a glycosylation site (N-linked (GlcNAc...) asparagine).

Belongs to the YIP1 family. As to quaternary structure, interacts with YIPF6; this interaction may stabilize YIPF1. May also form a ternary complex with YIPF2 and YIPF6.

The protein localises to the golgi apparatus. Its subcellular location is the cis-Golgi network membrane. It localises to the trans-Golgi network membrane. The protein resides in the late endosome membrane. This chain is Protein YIPF1 (Yipf1), found in Rattus norvegicus (Rat).